A 108-amino-acid chain; its full sequence is Complement inhibitor CirpT2 (108 aa).

The first 19 residues, 1-19 (MRTLVASLCVFAVFSAVCC), serve as a signal peptide directing secretion. Disulfide bonds link cysteine 40-cysteine 64, cysteine 59-cysteine 98, cysteine 76-cysteine 99, and cysteine 85-cysteine 104.

The protein belongs to the CirpT family. Expressed in salivary glands.

The protein localises to the secreted. Its function is as follows. Complement inhibitor. Prevents complement-mediated activation of C5 by sterically preventing direct binding of C5 to its convertase (binding with domains MG4 and MG5). Binds C5 at a different binding site than the other tick complement inhibitors OmCI and RaCI3, and the drug eculizumab. Inhibits the complement in human, rat and guinea pig, and also shows a reduced inhibition in rabbit and pig. This Dermacentor andersoni (Rocky mountain wood tick) protein is Complement inhibitor CirpT2.